Consider the following 408-residue polypeptide: Imidazolonepropionase (408 aa).

The Fe(3+) site is built by His-73 and His-75. Zn(2+)-binding residues include His-73 and His-75. Residues Arg-82, Tyr-145, and His-178 each coordinate 4-imidazolone-5-propanoate. Tyr-145 contributes to the N-formimidoyl-L-glutamate binding site. His-243 is a binding site for Fe(3+). Residue His-243 coordinates Zn(2+). Gln-246 contacts 4-imidazolone-5-propanoate. Asp-318 is a Fe(3+) binding site. Asp-318 contributes to the Zn(2+) binding site. N-formimidoyl-L-glutamate contacts are provided by Asn-320 and Gly-322. 4-imidazolone-5-propanoate is bound at residue Ser-323.

It belongs to the metallo-dependent hydrolases superfamily. HutI family. It depends on Zn(2+) as a cofactor. The cofactor is Fe(3+).

It localises to the cytoplasm. It carries out the reaction 4-imidazolone-5-propanoate + H2O = N-formimidoyl-L-glutamate. It participates in amino-acid degradation; L-histidine degradation into L-glutamate; N-formimidoyl-L-glutamate from L-histidine: step 3/3. Functionally, catalyzes the hydrolytic cleavage of the carbon-nitrogen bond in imidazolone-5-propanoate to yield N-formimidoyl-L-glutamate. It is the third step in the universal histidine degradation pathway. This chain is Imidazolonepropionase, found in Shewanella baltica (strain OS185).